The following is a 594-amino-acid chain: CRISPR-associated DNA-binding protein Cas12m (594 aa).

The interval 1–85 (MSRLEARTRY…EKVRQVMVFE (85 aa)) is recognition domain (REC1-N). A recognition domain (REC2) region spans residues 86 to 153 (SETTKKIKEL…ERSFIFEARK (68 aa)). Positions 154-211 (QELAQLEKERWAVVKELGKGSGLYWCNLEDVVNSYDIGRKKAKAAGGEMRFHRWDGTG) are recognition domain (REC1-C). Residues 212 to 314 (KVTVRFQKGL…RYKLNLVLEI (103 aa)) form a wedge domain (WED) region. Residues 315-329 (LGENTNRILPALEGT) are linker. Residues 330–540 (AAIDLGWRTV…KNHVEFTYVP (211 aa)) form a ruvC-I region. The tract at residues 541–575 (AENTTITCHKCGHKEKFDAAAQIIHTCSTCGELWD) is target nucleic-acid binding (TNB). Residues C548, C551, C567, and C570 each coordinate Zn(2+). Residues 576 to 594 (QDYNAAKNLLAFSQKGGVK) are ruvC-II. D577 serves as a coordination point for Mg(2+).

The protein belongs to the CRISPR-associated DNA-binding protein Cas12m family. Mg(2+) is required as a cofactor. The cofactor is Zn(2+).

Functionally, CRISPR (clustered regularly interspaced short palindromic repeat), is an adaptive immune system that provides protection against mobile genetic elements (viruses, transposable elements and conjugative plasmids). CRISPR clusters contain sequences complementary to antecedent mobile elements and target invading nucleic acids. CRISPR clusters are transcribed and processed into CRISPR RNA (crRNA). Recognizes a short motif in the CRISPR repeat sequences (the 5' PAM or protospacer adjacent motif, 5'-C/TCN-3' in this organism) to help distinguish self versus nonself, as targets within the bacterial CRISPR locus do not have PAMs. Upon expression in E.coli as a CRISPR locus inhibits plasmid propagation when targeted to regions essential for plasmid propagation (replication origin but not a selectable marker), probably by inhibiting transcription. Cas12m-crRNA binds DNA in a PAM-dependent, crRNA-guided fashion. Upon expression in E.coli as a CRISPR region preferentially binds to its associated crRNA. Probably required for pre-crRNA processing to mature crRNA. The protein is CRISPR-associated DNA-binding protein Cas12m of Thermanaerosceptrum fracticalcis.